The primary structure comprises 527 residues: Berberine bridge enzyme-like 14 (527 aa).

An N-terminal signal peptide occupies residues 1-23 (MKSSTTQTLIFTVFLLLIPTSFA). Cysteine 35 and cysteine 96 are disulfide-bonded. N-linked (GlcNAc...) asparagine glycans are attached at residues asparagine 47, asparagine 72, asparagine 161, asparagine 296, asparagine 328, asparagine 396, and asparagine 481. Residues 74–249 (TTRKPVAIVA…LAWKIKLVPV (176 aa)) form the FAD-binding PCMH-type domain. Residues 111 to 174 (HDYDGMSYLS…NLRGFPAGIC (64 aa)) constitute a cross-link (6-(S-cysteinyl)-8alpha-(pros-histidyl)-FAD (His-Cys)).

The protein belongs to the oxygen-dependent FAD-linked oxidoreductase family. It depends on FAD as a cofactor. The FAD cofactor is bound via a bicovalent 6-S-cysteinyl, 8alpha-N1-histidyl FAD linkage.

The protein localises to the secreted. It localises to the cell wall. This chain is Berberine bridge enzyme-like 14, found in Arabidopsis thaliana (Mouse-ear cress).